The primary structure comprises 158 residues: 2S seed storage albumin protein (158 aa).

The signal sequence occupies residues 1 to 21 (MTKFTILLISLLFCIAHTCSA). The Cell attachment site motif lies at 54–56 (RGD). Positions 65 to 81 (NHILRTMRGRINYIRRN) are excised as a propeptide.

Belongs to the 2S seed storage albumins family. In terms of assembly, the protein consists of two chains linked by 2 disulfide bonds. As to expression, expressed in cotyledons. Maximal expression in parenchyma cells undergoing DNA endoreduplication and cell expansion but not in actively dividing cells of the cotyledon.

Its function is as follows. This is a 2S seed storage protein. Binds to mammalian chromatin, preventing the normal formation of the kinetochore complex in the centromere and leading to the disruption of mitosis. This chain is 2S seed storage albumin protein, found in Glycine max (Soybean).